A 326-amino-acid chain; its full sequence is Transposase InsH for insertion sequence element IS5H (326 aa).

It belongs to the transposase 11 family.

Its function is as follows. Involved in the transposition of the insertion sequence IS5. This chain is Transposase InsH for insertion sequence element IS5H (insH6), found in Escherichia coli (strain K12).